The sequence spans 256 residues: Ubiquinone/menaquinone biosynthesis C-methyltransferase UbiE (256 aa).

S-adenosyl-L-methionine contacts are provided by residues Thr-79, Asp-100, and 128-129; that span reads DA.

This sequence belongs to the class I-like SAM-binding methyltransferase superfamily. MenG/UbiE family.

It catalyses the reaction a 2-demethylmenaquinol + S-adenosyl-L-methionine = a menaquinol + S-adenosyl-L-homocysteine + H(+). The catalysed reaction is a 2-methoxy-6-(all-trans-polyprenyl)benzene-1,4-diol + S-adenosyl-L-methionine = a 5-methoxy-2-methyl-3-(all-trans-polyprenyl)benzene-1,4-diol + S-adenosyl-L-homocysteine + H(+). The protein operates within quinol/quinone metabolism; menaquinone biosynthesis; menaquinol from 1,4-dihydroxy-2-naphthoate: step 2/2. It participates in cofactor biosynthesis; ubiquinone biosynthesis. Its function is as follows. Methyltransferase required for the conversion of demethylmenaquinol (DMKH2) to menaquinol (MKH2) and the conversion of 2-polyprenyl-6-methoxy-1,4-benzoquinol (DDMQH2) to 2-polyprenyl-3-methyl-6-methoxy-1,4-benzoquinol (DMQH2). The sequence is that of Ubiquinone/menaquinone biosynthesis C-methyltransferase UbiE from Pseudomonas aeruginosa (strain LESB58).